We begin with the raw amino-acid sequence, 467 residues long: Ergochrome gene cluster transcriptional coactivator CPUR_05432 (467 aa).

The 71-residue stretch at I109–L179 folds into the HTH iclR-type domain. A DNA-binding region (H-T-H motif) is located at residues I139–G158.

It is found in the nucleus. Transcriptional coactivator; part of the gene cluster responsible for the typical purple-black color of the ergot sclerotia. The ergochrome gene cluster produces several ergot pigments including the yellow ergochrome secalonic acid and its derivatives, as well as the red anthraquinones endocrocin and clavorubin. With CPUR_05433, coregulates the production of geodin. This chain is Ergochrome gene cluster transcriptional coactivator CPUR_05432, found in Claviceps purpurea (strain 20.1) (Ergot fungus).